Consider the following 394-residue polypeptide: Dual specificity protein phosphatase 4 (394 aa).

N-acetylvaline is present on valine 2. The region spanning 41 to 159 (SGGKCLLLDC…FSSEYPEFCS (119 aa)) is the Rhodanese domain. The Tyrosine-protein phosphatase domain maps to 195 to 336 (GPVEILPFLY…LLQFESQVLA (142 aa)). Cysteine 280 serves as the catalytic Phosphocysteine intermediate. A phosphoserine; by MAPK mark is found at serine 386 and serine 391.

The protein belongs to the protein-tyrosine phosphatase family. Non-receptor class dual specificity subfamily. Hollow spherical complex composed of 24 subunits with pseudooctahedral symmetry, has a tetramer as the basic unit. Phosphorylation in the C-terminus by ERK1/2 inhibits proteasomal degradation and stabilizes the protein.

It localises to the nucleus. The enzyme catalyses O-phospho-L-tyrosyl-[protein] + H2O = L-tyrosyl-[protein] + phosphate. It catalyses the reaction O-phospho-L-seryl-[protein] + H2O = L-seryl-[protein] + phosphate. The catalysed reaction is O-phospho-L-threonyl-[protein] + H2O = L-threonyl-[protein] + phosphate. Regulates mitogenic signal transduction by dephosphorylating both Thr and Tyr residues on MAP kinases ERK1 and ERK2. The sequence is that of Dual specificity protein phosphatase 4 (DUSP4) from Homo sapiens (Human).